Here is a 217-residue protein sequence, read N- to C-terminus: GTP cyclohydrolase 1 (217 aa).

Zn(2+) contacts are provided by cysteine 109, histidine 112, and cysteine 180.

It belongs to the GTP cyclohydrolase I family. In terms of assembly, toroid-shaped homodecamer, composed of two pentamers of five dimers.

The enzyme catalyses GTP + H2O = 7,8-dihydroneopterin 3'-triphosphate + formate + H(+). It participates in cofactor biosynthesis; 7,8-dihydroneopterin triphosphate biosynthesis; 7,8-dihydroneopterin triphosphate from GTP: step 1/1. This chain is GTP cyclohydrolase 1, found in Photobacterium profundum (strain SS9).